The following is a 180-amino-acid chain: Membrane protein UL121 (180 aa).

Positions 1 to 27 are cleaved as a signal peptide; the sequence is MWGCGWSRILVLLLLMCMALMARGTYG. A helical transmembrane segment spans residues 143–163; that stretch reads LGLLYAVCLILSFSIVTAALW.

It belongs to the HHV-5 UL121 protein family.

Its subcellular location is the host membrane. The polypeptide is Membrane protein UL121 (UL121) (Human cytomegalovirus (strain Merlin) (HHV-5)).